Here is a 181-residue protein sequence, read N- to C-terminus: 6,7-dimethyl-8-ribityllumazine synthase 2 (181 aa).

The tract at residues 1–23 (MSLPMTETVTDPAETAPPTAERS) is disordered. 5-amino-6-(D-ribitylamino)uracil is bound by residues W40, 74-76 (SFE), 98-100 (LVV), and S129.

It belongs to the DMRL synthase family.

It carries out the reaction (2S)-2-hydroxy-3-oxobutyl phosphate + 5-amino-6-(D-ribitylamino)uracil = 6,7-dimethyl-8-(1-D-ribityl)lumazine + phosphate + 2 H2O + H(+). It participates in cofactor biosynthesis; riboflavin biosynthesis; riboflavin from 2-hydroxy-3-oxobutyl phosphate and 5-amino-6-(D-ribitylamino)uracil: step 1/2. Its function is as follows. Catalyzes the formation of 6,7-dimethyl-8-ribityllumazine by condensation of 5-amino-6-(D-ribitylamino)uracil with 3,4-dihydroxy-2-butanone 4-phosphate. This is the penultimate step in the biosynthesis of riboflavin. This chain is 6,7-dimethyl-8-ribityllumazine synthase 2, found in Rhodopseudomonas palustris (strain ATCC BAA-98 / CGA009).